A 172-amino-acid chain; its full sequence is Small ribosomal subunit protein uS5 (172 aa).

One can recognise an S5 DRBM domain in the interval 17-80; it reads LREKMISVNR…EQARRNMFKV (64 aa).

Belongs to the universal ribosomal protein uS5 family. Part of the 30S ribosomal subunit. Contacts proteins S4 and S8.

Functionally, with S4 and S12 plays an important role in translational accuracy. Its function is as follows. Located at the back of the 30S subunit body where it stabilizes the conformation of the head with respect to the body. In Paraburkholderia xenovorans (strain LB400), this protein is Small ribosomal subunit protein uS5.